The chain runs to 517 residues: Probable bifunctional methylthioribulose-1-phosphate dehydratase/enolase-phosphatase E1 (517 aa).

Residues 1 to 242 (MACSGCSCEA…CIKLYQLGID (242 aa)) are methylthioribulose-1-phosphate dehydratase. Position 114 (C114) interacts with substrate. Positions 132 and 134 each coordinate Zn(2+). The active-site Proton donor/acceptor; for methylthioribulose-1-phosphate dehydratase activity is E157. A Zn(2+)-binding site is contributed by H207. Residues 278–517 (VVLDIEGTTT…FRTIKSFSEI (240 aa)) form an enolase-phosphatase E1 region. D281 and E283 together coordinate Mg(2+). Residues 416–417 (SS) and K450 contribute to the substrate site. Position 476 (D476) interacts with Mg(2+).

The protein in the N-terminal section; belongs to the aldolase class II family. MtnB subfamily. This sequence in the C-terminal section; belongs to the HAD-like hydrolase superfamily. MasA/MtnC family. Zn(2+) serves as cofactor. Requires Mg(2+) as cofactor.

It carries out the reaction 5-(methylsulfanyl)-D-ribulose 1-phosphate = 5-methylsulfanyl-2,3-dioxopentyl phosphate + H2O. The catalysed reaction is 5-methylsulfanyl-2,3-dioxopentyl phosphate + H2O = 1,2-dihydroxy-5-(methylsulfanyl)pent-1-en-3-one + phosphate. The protein operates within amino-acid biosynthesis; L-methionine biosynthesis via salvage pathway; L-methionine from S-methyl-5-thio-alpha-D-ribose 1-phosphate: step 2/6. Its pathway is amino-acid biosynthesis; L-methionine biosynthesis via salvage pathway; L-methionine from S-methyl-5-thio-alpha-D-ribose 1-phosphate: step 3/6. It functions in the pathway amino-acid biosynthesis; L-methionine biosynthesis via salvage pathway; L-methionine from S-methyl-5-thio-alpha-D-ribose 1-phosphate: step 4/6. The polypeptide is Probable bifunctional methylthioribulose-1-phosphate dehydratase/enolase-phosphatase E1 (Zea mays (Maize)).